A 479-amino-acid polypeptide reads, in one-letter code: Aspartyl/glutamyl-tRNA(Asn/Gln) amidotransferase subunit B (479 aa).

This sequence belongs to the GatB/GatE family. GatB subfamily. In terms of assembly, heterotrimer of A, B and C subunits.

The catalysed reaction is L-glutamyl-tRNA(Gln) + L-glutamine + ATP + H2O = L-glutaminyl-tRNA(Gln) + L-glutamate + ADP + phosphate + H(+). It catalyses the reaction L-aspartyl-tRNA(Asn) + L-glutamine + ATP + H2O = L-asparaginyl-tRNA(Asn) + L-glutamate + ADP + phosphate + 2 H(+). Functionally, allows the formation of correctly charged Asn-tRNA(Asn) or Gln-tRNA(Gln) through the transamidation of misacylated Asp-tRNA(Asn) or Glu-tRNA(Gln) in organisms which lack either or both of asparaginyl-tRNA or glutaminyl-tRNA synthetases. The reaction takes place in the presence of glutamine and ATP through an activated phospho-Asp-tRNA(Asn) or phospho-Glu-tRNA(Gln). The protein is Aspartyl/glutamyl-tRNA(Asn/Gln) amidotransferase subunit B of Streptococcus pyogenes serotype M49 (strain NZ131).